The chain runs to 495 residues: Protein nucleotidyltransferase YdiU (495 aa).

Residues G92, G94, R95, K114, D126, G127, R177, and R184 each contribute to the ATP site. D261 acts as the Proton acceptor in catalysis. 2 residues coordinate Mg(2+): N262 and D271. D271 contributes to the ATP binding site.

The protein belongs to the SELO family. Requires Mg(2+) as cofactor. The cofactor is Mn(2+).

The catalysed reaction is L-seryl-[protein] + ATP = 3-O-(5'-adenylyl)-L-seryl-[protein] + diphosphate. It catalyses the reaction L-threonyl-[protein] + ATP = 3-O-(5'-adenylyl)-L-threonyl-[protein] + diphosphate. It carries out the reaction L-tyrosyl-[protein] + ATP = O-(5'-adenylyl)-L-tyrosyl-[protein] + diphosphate. The enzyme catalyses L-histidyl-[protein] + UTP = N(tele)-(5'-uridylyl)-L-histidyl-[protein] + diphosphate. The catalysed reaction is L-seryl-[protein] + UTP = O-(5'-uridylyl)-L-seryl-[protein] + diphosphate. It catalyses the reaction L-tyrosyl-[protein] + UTP = O-(5'-uridylyl)-L-tyrosyl-[protein] + diphosphate. Nucleotidyltransferase involved in the post-translational modification of proteins. It can catalyze the addition of adenosine monophosphate (AMP) or uridine monophosphate (UMP) to a protein, resulting in modifications known as AMPylation and UMPylation. This chain is Protein nucleotidyltransferase YdiU, found in Bordetella bronchiseptica (strain ATCC BAA-588 / NCTC 13252 / RB50) (Alcaligenes bronchisepticus).